We begin with the raw amino-acid sequence, 227 residues long: UPF0758 protein Dred_2549 (227 aa).

The 123-residue stretch at I105–I227 folds into the MPN domain. Zn(2+)-binding residues include H176, H178, and D189. The JAMM motif signature appears at H176–D189.

It belongs to the UPF0758 family.

The sequence is that of UPF0758 protein Dred_2549 from Desulforamulus reducens (strain ATCC BAA-1160 / DSM 100696 / MI-1) (Desulfotomaculum reducens).